The chain runs to 249 residues: Ribonuclease PH (249 aa).

Residues R86 and 124-126 (GTR) each bind phosphate.

It belongs to the RNase PH family. In terms of assembly, homohexameric ring arranged as a trimer of dimers.

It carries out the reaction tRNA(n+1) + phosphate = tRNA(n) + a ribonucleoside 5'-diphosphate. Phosphorolytic 3'-5' exoribonuclease that plays an important role in tRNA 3'-end maturation. Removes nucleotide residues following the 3'-CCA terminus of tRNAs; can also add nucleotides to the ends of RNA molecules by using nucleoside diphosphates as substrates, but this may not be physiologically important. Probably plays a role in initiation of 16S rRNA degradation (leading to ribosome degradation) during starvation. This chain is Ribonuclease PH, found in Clostridium botulinum (strain Eklund 17B / Type B).